Reading from the N-terminus, the 362-residue chain is Glutamate 5-kinase (362 aa).

Lys3 contributes to the ATP binding site. Positions 43, 128, and 140 each coordinate substrate. Residues 160-161 (TD) and 202-208 (TGGMRTK) contribute to the ATP site. Residues 267–348 (AGAILIDDGA…REIENVLGYS (82 aa)) form the PUA domain.

The protein belongs to the glutamate 5-kinase family.

It is found in the cytoplasm. The enzyme catalyses L-glutamate + ATP = L-glutamyl 5-phosphate + ADP. Its pathway is amino-acid biosynthesis; L-proline biosynthesis; L-glutamate 5-semialdehyde from L-glutamate: step 1/2. In terms of biological role, catalyzes the transfer of a phosphate group to glutamate to form L-glutamate 5-phosphate. This chain is Glutamate 5-kinase, found in Xanthomonas euvesicatoria pv. vesicatoria (strain 85-10) (Xanthomonas campestris pv. vesicatoria).